The following is a 238-amino-acid chain: tRNA1(Val) (adenine(37)-N6)-methyltransferase (238 aa).

It belongs to the methyltransferase superfamily. tRNA (adenine-N(6)-)-methyltransferase family.

The protein resides in the cytoplasm. The catalysed reaction is adenosine(37) in tRNA1(Val) + S-adenosyl-L-methionine = N(6)-methyladenosine(37) in tRNA1(Val) + S-adenosyl-L-homocysteine + H(+). Functionally, specifically methylates the adenine in position 37 of tRNA(1)(Val) (anticodon cmo5UAC). This chain is tRNA1(Val) (adenine(37)-N6)-methyltransferase, found in Shewanella baltica (strain OS223).